The sequence spans 123 residues: DNA-directed RNA polymerase I subunit RPA12 (123 aa).

Zn(2+)-binding residues include Cys-17, Cys-20, Cys-35, Cys-38, Cys-84, and Cys-87. A C4-type zinc finger spans residues 17-38; the sequence is CPDCGSVLPLPGVQDTVICPRC. Residues 80–120 form a TFIIS-type zinc finger; sequence VDRRCSRCGHEGMAYYTRQMRSADEGQTVFYTCINCKFQEK. The short motif at 103–104 is the Hairpin element; it reads DE. Residues Cys-112 and Cys-115 each contribute to the Zn(2+) site.

This sequence belongs to the archaeal RpoM/eukaryotic RPA12/RPB9/RPC11 RNA polymerase family. Component of the RNA polymerase I (Pol I) complex consisting of 13 subunits: a ten-subunit catalytic core composed of POLR1A/RPA1, POLR1B/RPA2, POLR1C/RPAC1, POLR1D/RPAC2, POLR1H/RPA12, POLR2E/RPABC1, POLR2F/RPABC2, POLR2H/RPABC3, POLR2K/RPABC4 and POLR2L/RPABC5; a mobile stalk subunit POLR1F/RPA43 protruding from the core and additional subunits homologous to general transcription factors POLR1E/RPA49 and POLR1G/RPA34. Part of Pol I pre-initiation complex (PIC), in which Pol I core assembles with RRN3 and promoter-bound UTBF and SL1/TIF-IB complex.

Its subcellular location is the nucleus. It localises to the nucleolus. In terms of biological role, core component of RNA polymerase I (Pol I), a DNA-dependent RNA polymerase which synthesizes ribosomal RNA precursors using the four ribonucleoside triphosphates as substrates. Can mediate Pol I proofreading of the nascent RNA transcript. Anchors into the Pol I active site to monitor transcription fidelity and cleave mis-incorporated 5'-ribonucleotides. This is DNA-directed RNA polymerase I subunit RPA12 from Rattus norvegicus (Rat).